The sequence spans 304 residues: RING-H2 finger protein ATL2 (304 aa).

Residues 30-50 (IMLSAIVILFFVVILMVFLHL) traverse the membrane as a helical segment. Residues 119–161 (CAVCLSEFEESETGRVLPNCQHTFHVDCIDMWFHSHSTCPLCR) form an RING-type; atypical zinc finger. The interval 194 to 304 (EPSSSSGLTD…DIERGGEESR (111 aa)) is disordered. Basic and acidic residues predominate over residues 227-244 (VPRRTFSEFEDELTRRDS). Polar residues predominate over residues 283–293 (PTLSCRIQMTE). Basic and acidic residues predominate over residues 295 to 304 (DIERGGEESR).

The protein belongs to the RING-type zinc finger family. ATL subfamily. Preferentially expressed around the apical meristem region.

It is found in the membrane. The catalysed reaction is S-ubiquitinyl-[E2 ubiquitin-conjugating enzyme]-L-cysteine + [acceptor protein]-L-lysine = [E2 ubiquitin-conjugating enzyme]-L-cysteine + N(6)-ubiquitinyl-[acceptor protein]-L-lysine.. It functions in the pathway protein modification; protein ubiquitination. Functionally, may be involved in the early steps of the plant defense signaling pathway. The polypeptide is RING-H2 finger protein ATL2 (ATL2) (Arabidopsis thaliana (Mouse-ear cress)).